A 397-amino-acid chain; its full sequence is Elongation factor Tu (397 aa).

In terms of domain architecture, tr-type G spans 10-206; that stretch reads KPHVNIGTIG…AVDENIPQPE (197 aa). The interval 19–26 is G1; sequence GHVDHGKT. Residue 19–26 participates in GTP binding; the sequence is GHVDHGKT. Residue Thr26 coordinates Mg(2+). The G2 stretch occupies residues 62–66; the sequence is GITIS. The segment at 83–86 is G3; that stretch reads DCPG. Residues 83–87 and 138–141 each bind GTP; these read DCPGH and NKAD. The tract at residues 138–141 is G4; that stretch reads NKAD. The tract at residues 176-178 is G5; the sequence is SAL.

The protein belongs to the TRAFAC class translation factor GTPase superfamily. Classic translation factor GTPase family. EF-Tu/EF-1A subfamily. As to quaternary structure, monomer.

The protein resides in the cytoplasm. It catalyses the reaction GTP + H2O = GDP + phosphate + H(+). In terms of biological role, GTP hydrolase that promotes the GTP-dependent binding of aminoacyl-tRNA to the A-site of ribosomes during protein biosynthesis. The polypeptide is Elongation factor Tu (Streptomyces cinnamoneus (Streptoverticillium cinnamoneum)).